Reading from the N-terminus, the 419-residue chain is Multifunctional CCA protein (419 aa).

ATP-binding residues include G8 and R11. The CTP site is built by G8 and R11. Residues D21 and D23 each contribute to the Mg(2+) site. ATP-binding residues include R91, R137, and R140. Residues R91, R137, and R140 each coordinate CTP. One can recognise an HD domain in the interval 228–334 (SFLHTMLVLQ…IKLFNKLDVW (107 aa)).

It belongs to the tRNA nucleotidyltransferase/poly(A) polymerase family. Bacterial CCA-adding enzyme type 1 subfamily. In terms of assembly, monomer. Can also form homodimers and oligomers. Requires Mg(2+) as cofactor. It depends on Ni(2+) as a cofactor.

The catalysed reaction is a tRNA precursor + 2 CTP + ATP = a tRNA with a 3' CCA end + 3 diphosphate. It carries out the reaction a tRNA with a 3' CCA end + 2 CTP + ATP = a tRNA with a 3' CCACCA end + 3 diphosphate. Catalyzes the addition and repair of the essential 3'-terminal CCA sequence in tRNAs without using a nucleic acid template. Adds these three nucleotides in the order of C, C, and A to the tRNA nucleotide-73, using CTP and ATP as substrates and producing inorganic pyrophosphate. tRNA 3'-terminal CCA addition is required both for tRNA processing and repair. Also involved in tRNA surveillance by mediating tandem CCA addition to generate a CCACCA at the 3' terminus of unstable tRNAs. While stable tRNAs receive only 3'-terminal CCA, unstable tRNAs are marked with CCACCA and rapidly degraded. The chain is Multifunctional CCA protein from Mannheimia succiniciproducens (strain KCTC 0769BP / MBEL55E).